We begin with the raw amino-acid sequence, 336 residues long: Galactose/methyl galactoside import permease protein MglC (336 aa).

Over 1 to 16 (MSALNKKSFLTYLKEG) the chain is Periplasmic. Residues 17 to 37 (GIYVVLLVLLAIIIFQDPTFL) traverse the membrane as a helical segment. At 38–52 (SLLNLSNILTQSSVR) the chain is on the cytoplasmic side. Residues 53–73 (IIIALGVAGLIVTQGTDLSAG) form a helical membrane-spanning segment. Residues 74–106 (RQVGLAAVVAATLLQSMDNANKVFPEMATMPIA) are Periplasmic-facing. 2 consecutive transmembrane segments (helical) span residues 107–127 (LVILIVCAIGAVIGLINGLII) and 128–148 (AYLNVTPFITTLGTMIIVYGI). Residues 149 to 180 (NSLYYDFVGASPISGFDSGFSTFAQGFVALGS) lie on the Periplasmic side of the membrane. Residues 181–201 (FRLSYITFYALIAVAFVWVLW) form a helical membrane-spanning segment. The Cytoplasmic segment spans residues 202-226 (NKTRFGKNIFAIGGNPEAAKVSGVN). Residues 227-247 (VGLNLLMIYALSGVFYAFGGM) traverse the membrane as a helical segment. The Periplasmic segment spans residues 248-256 (LEAGRIGSA). The helical transmembrane segment at 257-277 (TNNLGFMYELDAIAACVVGGV) threads the bilayer. Serine 278 is a topological domain (cytoplasmic). The chain crosses the membrane as a helical span at residues 279 to 299 (FSGGVGTVIGVVTGVIIFTVI). Residues 300–305 (NYGLTY) lie on the Periplasmic side of the membrane. Residues 306–326 (IGVNPYWQYIIKGAIIIFAVA) form a helical membrane-spanning segment. Residues 327–336 (LDSLKYARKK) are Cytoplasmic-facing.

It belongs to the binding-protein-dependent transport system permease family. AraH/RbsC subfamily. As to quaternary structure, the complex is composed of one ATP-binding protein (MglA), two transmembrane proteins (MglC) and a solute-binding protein (MglB).

Its subcellular location is the cell inner membrane. Part of the ABC transporter complex MglABC involved in galactose/methyl galactoside import. Probably responsible for the translocation of the substrate across the membrane. The sequence is that of Galactose/methyl galactoside import permease protein MglC (mglC) from Escherichia coli (strain K12).